The primary structure comprises 99 residues: Large ribosomal subunit protein uL23 (99 aa).

Belongs to the universal ribosomal protein uL23 family. In terms of assembly, part of the 50S ribosomal subunit. Contacts protein L29, and trigger factor when it is bound to the ribosome.

One of the early assembly proteins it binds 23S rRNA. One of the proteins that surrounds the polypeptide exit tunnel on the outside of the ribosome. Forms the main docking site for trigger factor binding to the ribosome. The sequence is that of Large ribosomal subunit protein uL23 from Francisella tularensis subsp. holarctica (strain OSU18).